A 237-amino-acid chain; its full sequence is Concanavalin-A (237 aa).

The Mn(2+) site is built by glutamate 8 and aspartate 10. Ca(2+) contacts are provided by aspartate 10, tyrosine 12, asparagine 14, and aspartate 19. An a carbohydrate-binding site is contributed by asparagine 14. Positions 19 and 24 each coordinate Mn(2+). A carbohydrate-binding positions include 98–100, aspartate 208, and arginine 228; that span reads GLY.

This sequence belongs to the leguminous lectin family. In terms of assembly, homotetramer. Concanavalin A-like lectins of the Diocleinae subtribe undergo proteolytic processing referred to as circular permutation. The propeptide is split into an N-terminal and a C-terminal part, the gamma and beta chain, respectively. These are then religated in beta-gamma order to form the mature alpha chain. The beta and gamma chains can often be detected in cell extracts. Residues 1-118 of the mature chain, as displayed here, probably constitute the beta chain in the propeptide, residues 119-237 the gamma chain.

Functionally, glucose/D-mannose specific lectin. In Canavalia cathartica (Jackbean), this protein is Concanavalin-A.